The primary structure comprises 110 residues: Protein YcgL (110 aa).

The region spanning 14-98 (MFCVIYRSSK…PPEDLLKQHL (85 aa)) is the YcgL domain. The interval 88 to 110 (PPPEDLLKQHLSSVGQNTSHADR) is disordered. A compositionally biased stretch (polar residues) spans 97 to 110 (HLSSVGQNTSHADR).

The protein is Protein YcgL of Salmonella schwarzengrund (strain CVM19633).